A 139-amino-acid chain; its full sequence is MASQFELSVVSAEKEIFNGNVVSVRVTGIDGELGVYAGHTPLLTSIKPGMVKYTLEDGKEEFIYVSGGFLEVQPTIVTVLADVAIRGEELDQQRILAAKRKAEDTLSKSNNAELSAKLSREIAKLRVYEIVNSKLANRR.

It belongs to the ATPase epsilon chain family. As to quaternary structure, F-type ATPases have 2 components, CF(1) - the catalytic core - and CF(0) - the membrane proton channel. CF(1) has five subunits: alpha(3), beta(3), gamma(1), delta(1), epsilon(1). CF(0) has three main subunits: a, b and c.

The protein localises to the cell inner membrane. Functionally, produces ATP from ADP in the presence of a proton gradient across the membrane. The chain is ATP synthase epsilon chain from Actinobacillus pleuropneumoniae serotype 7 (strain AP76).